Consider the following 208-residue polypeptide: MKARLPLLVGVTGGIGSGKSTVCAMLAEMGCELFEADRIAKELQVEDPEVIRGIEKLFGPDVYSRDASGKLLIDRKAIAAIVFSEPEKLAALNRLIHPKVREAFVNEVKRCAREGKRILCKEAAILFEAGADRDLDRIIVVAANDGLRLARAVARGLACEEARKRMQAQWPQEKLVERAHYVIFNDGTLDELRSQVEQVYQSLLTVVE.

The DPCK domain occupies 8 to 208 (LVGVTGGIGS…VYQSLLTVVE (201 aa)). 16–21 (GSGKST) contributes to the ATP binding site.

Belongs to the CoaE family.

The protein resides in the cytoplasm. The catalysed reaction is 3'-dephospho-CoA + ATP = ADP + CoA + H(+). It participates in cofactor biosynthesis; coenzyme A biosynthesis; CoA from (R)-pantothenate: step 5/5. Its function is as follows. Catalyzes the phosphorylation of the 3'-hydroxyl group of dephosphocoenzyme A to form coenzyme A. The polypeptide is Dephospho-CoA kinase (Chlorobaculum tepidum (strain ATCC 49652 / DSM 12025 / NBRC 103806 / TLS) (Chlorobium tepidum)).